The following is a 117-amino-acid chain: Ribonuclease P protein component (117 aa).

This sequence belongs to the RnpA family. In terms of assembly, consists of a catalytic RNA component (M1 or rnpB) and a protein subunit.

It carries out the reaction Endonucleolytic cleavage of RNA, removing 5'-extranucleotides from tRNA precursor.. Its function is as follows. RNaseP catalyzes the removal of the 5'-leader sequence from pre-tRNA to produce the mature 5'-terminus. It can also cleave other RNA substrates such as 4.5S RNA. The protein component plays an auxiliary but essential role in vivo by binding to the 5'-leader sequence and broadening the substrate specificity of the ribozyme. The polypeptide is Ribonuclease P protein component (Aliivibrio salmonicida (strain LFI1238) (Vibrio salmonicida (strain LFI1238))).